The chain runs to 153 residues: MKPQKSLRARAMDILSRQEVSRIGLKRKLAPHAESEEELENVLNEFAERNWQSDLRYAEAYIRSKSRKHGSLRLKQALAQQGIDEETSRNLLPDRSSEKQAAIDVLRKKFKHPAADLKEKQKQARFLAYRGFDADTVQTALKHAWDENWEDGC.

This sequence belongs to the RecX family.

It is found in the cytoplasm. Functionally, modulates RecA activity. This is Regulatory protein RecX from Neisseria meningitidis serogroup C / serotype 2a (strain ATCC 700532 / DSM 15464 / FAM18).